Here is a 946-residue protein sequence, read N- to C-terminus: Bifunctional glutamine synthetase adenylyltransferase/adenylyl-removing enzyme (946 aa).

Positions 1–440 (MKPLSSPLQQ…VFNELIGDDE (440 aa)) are adenylyl removase. Positions 449-946 (SEQWRELWQD…ASWQKWLVEE (498 aa)) are adenylyl transferase.

The protein belongs to the GlnE family. The cofactor is Mg(2+).

It carries out the reaction [glutamine synthetase]-O(4)-(5'-adenylyl)-L-tyrosine + phosphate = [glutamine synthetase]-L-tyrosine + ADP. It catalyses the reaction [glutamine synthetase]-L-tyrosine + ATP = [glutamine synthetase]-O(4)-(5'-adenylyl)-L-tyrosine + diphosphate. Involved in the regulation of glutamine synthetase GlnA, a key enzyme in the process to assimilate ammonia. When cellular nitrogen levels are high, the C-terminal adenylyl transferase (AT) inactivates GlnA by covalent transfer of an adenylyl group from ATP to specific tyrosine residue of GlnA, thus reducing its activity. Conversely, when nitrogen levels are low, the N-terminal adenylyl removase (AR) activates GlnA by removing the adenylyl group by phosphorolysis, increasing its activity. The regulatory region of GlnE binds the signal transduction protein PII (GlnB) which indicates the nitrogen status of the cell. This chain is Bifunctional glutamine synthetase adenylyltransferase/adenylyl-removing enzyme, found in Shigella boydii serotype 4 (strain Sb227).